Here is a 222-residue protein sequence, read N- to C-terminus: Arginine ABC transporter permease protein ArtM (222 aa).

The Periplasmic segment spans residues 1-15 (MFEYLPELMKGLHTS). The 197-residue stretch at 12–208 (LHTSLTLTVA…VVNGLLTLMM (197 aa)) folds into the ABC transmembrane type-1 domain. Residues 16–36 (LTLTVASLIVALILALIFTII) form a helical membrane-spanning segment. Residues 37–49 (LTLKTPVLVWLVR) lie on the Cytoplasmic side of the membrane. The helical transmembrane segment at 50 to 70 (GYITLFTGTPLLVQIFLIYYG) threads the bilayer. Topologically, residues 71 to 79 (PGQFPTLQE) are periplasmic. A helical membrane pass occupies residues 80-100 (YPALWHLLSEPWLCALIALSL). Residues 101-154 (NSAAYTTQLFYGAIRAIPEGQWQSCSALGMSKKDTLAILLPYAFKRSLSSYSNE) lie on the Cytoplasmic side of the membrane. The chain crosses the membrane as a helical span at residues 155-175 (VVLVFKSTSLAYTITLMEVMG). The Periplasmic portion of the chain corresponds to 176-186 (YSQLLYGRTYD). The chain crosses the membrane as a helical span at residues 187–207 (VMVFGAAGIIYLVVNGLLTLM). Over 208–222 (MRLIERKALAFERRN) the chain is Cytoplasmic.

This sequence belongs to the binding-protein-dependent transport system permease family. HisMQ subfamily. As to quaternary structure, the complex is composed of two ATP-binding proteins (ArtP), two transmembrane proteins (ArtM and ArtQ) and two solute-binding proteins (ArtJ and ArtI).

Its subcellular location is the cell inner membrane. Part of the ABC transporter complex ArtPIQMJ involved in arginine transport. Probably responsible for the translocation of the substrate across the membrane. The protein is Arginine ABC transporter permease protein ArtM (artM) of Escherichia coli (strain K12).